A 91-amino-acid chain; its full sequence is Signal peptidase complex subunit 1 (91 aa).

Residues 1–28 are Cytoplasmic-facing; sequence MEIFNDLSRKLVFPIDYPSQRRVAKLTD. Residues 29 to 48 traverse the membrane as a helical segment; sequence IILGSGTLVSCLLGFYAGSL. Topologically, residues 49–51 are lumenal; the sequence is SLT. Residues 52–71 traverse the membrane as a helical segment; sequence LYAFAAAYGLALLLVVPAYG. Topologically, residues 72 to 91 are cytoplasmic; the sequence is KYRQQKLAWVGSAAATTKDL.

The protein belongs to the SPCS1 family. Component of the signal peptidase complex (SPC) composed of a catalytic subunit SEC11 and three accessory subunits SPC1, SPC2 and SPC3. The complex induces a local thinning of the ER membrane which is used to measure the length of the signal peptide (SP) h-region of protein substrates. This ensures the selectivity of the complex towards h-regions shorter than 18-20 amino acids. SPC associates with the translocon complex.

The protein resides in the endoplasmic reticulum membrane. Its function is as follows. Component of the signal peptidase complex (SPC) which catalyzes the cleavage of N-terminal signal sequences from nascent proteins as they are translocated into the lumen of the endoplasmic reticulum. Dispensable for SPC enzymatic activity. The polypeptide is Signal peptidase complex subunit 1 (SPC1) (Eremothecium gossypii (strain ATCC 10895 / CBS 109.51 / FGSC 9923 / NRRL Y-1056) (Yeast)).